A 932-amino-acid polypeptide reads, in one-letter code: Glycine dehydrogenase (decarboxylating) (932 aa).

Residue K685 is modified to N6-(pyridoxal phosphate)lysine.

The protein belongs to the GcvP family. In terms of assembly, the glycine cleavage system is composed of four proteins: P, T, L and H. Requires pyridoxal 5'-phosphate as cofactor.

It catalyses the reaction N(6)-[(R)-lipoyl]-L-lysyl-[glycine-cleavage complex H protein] + glycine + H(+) = N(6)-[(R)-S(8)-aminomethyldihydrolipoyl]-L-lysyl-[glycine-cleavage complex H protein] + CO2. Its function is as follows. The glycine cleavage system catalyzes the degradation of glycine. The P protein binds the alpha-amino group of glycine through its pyridoxal phosphate cofactor; CO(2) is released and the remaining methylamine moiety is then transferred to the lipoamide cofactor of the H protein. This Brucella suis (strain ATCC 23445 / NCTC 10510) protein is Glycine dehydrogenase (decarboxylating).